The primary structure comprises 544 residues: CTP synthase (544 aa).

Residues 1-266 (MKKRFIFITG…DQIICHHFKL (266 aa)) are amidoligase domain. Serine 14 contacts CTP. Serine 14 serves as a coordination point for UTP. Residues 15-20 (SLGKGI) and aspartate 72 each bind ATP. Mg(2+)-binding residues include aspartate 72 and glutamate 140. CTP contacts are provided by residues 147–149 (DIE), 187–192 (KTKPTQ), and lysine 223. Residues 187-192 (KTKPTQ) and lysine 223 each bind UTP. A Glutamine amidotransferase type-1 domain is found at 291 to 541 (TIGIIGKYIK…IKAAIQYKKI (251 aa)). Glycine 352 is an L-glutamine binding site. Cysteine 379 (nucleophile; for glutamine hydrolysis) is an active-site residue. Residues 380 to 383 (LGMQ), glutamate 403, and arginine 469 contribute to the L-glutamine site. Residues histidine 514 and glutamate 516 contribute to the active site.

The protein belongs to the CTP synthase family. In terms of assembly, homotetramer.

It catalyses the reaction UTP + L-glutamine + ATP + H2O = CTP + L-glutamate + ADP + phosphate + 2 H(+). The catalysed reaction is L-glutamine + H2O = L-glutamate + NH4(+). The enzyme catalyses UTP + NH4(+) + ATP = CTP + ADP + phosphate + 2 H(+). The protein operates within pyrimidine metabolism; CTP biosynthesis via de novo pathway; CTP from UDP: step 2/2. Allosterically activated by GTP, when glutamine is the substrate; GTP has no effect on the reaction when ammonia is the substrate. The allosteric effector GTP functions by stabilizing the protein conformation that binds the tetrahedral intermediate(s) formed during glutamine hydrolysis. Inhibited by the product CTP, via allosteric rather than competitive inhibition. Catalyzes the ATP-dependent amination of UTP to CTP with either L-glutamine or ammonia as the source of nitrogen. Regulates intracellular CTP levels through interactions with the four ribonucleotide triphosphates. This Buchnera aphidicola subsp. Baizongia pistaciae (strain Bp) protein is CTP synthase.